Reading from the N-terminus, the 141-residue chain is Hemoglobin subunit alpha (141 aa).

A Globin domain is found at valine 1–arginine 141. Serine 3 carries the post-translational modification Phosphoserine. Residues lysine 7 and lysine 11 each carry the N6-succinyllysine modification. The residue at position 16 (lysine 16) is an N6-acetyllysine; alternate. N6-succinyllysine; alternate is present on lysine 16. Position 24 is a phosphotyrosine (tyrosine 24). Serine 35 bears the Phosphoserine mark. Lysine 40 is modified (N6-succinyllysine). Phosphoserine is present on serine 49. Position 58 (histidine 58) interacts with O2. Histidine 87 is a heme b binding site. Serine 102 bears the Phosphoserine mark. Threonine 108 carries the post-translational modification Phosphothreonine. Serine 124 carries the phosphoserine modification. Residues threonine 134 and threonine 137 each carry the phosphothreonine modification. Serine 138 carries the post-translational modification Phosphoserine.

The protein belongs to the globin family. Heterotetramer of two alpha chains and two beta chains. As to expression, red blood cells.

Functionally, involved in oxygen transport from the lung to the various peripheral tissues. In terms of biological role, hemopressin acts as an antagonist peptide of the cannabinoid receptor CNR1. Hemopressin-binding efficiently blocks cannabinoid receptor CNR1 and subsequent signaling. This chain is Hemoglobin subunit alpha (HBA), found in Hippopotamus amphibius (Hippopotamus).